The sequence spans 409 residues: MMKVLLSGGGTGGHVYPAIAIANKIRDEHPDAEIIFVGTEKGIESEIVPKYGFELKTVTVQGFKRKIDFDNVKRVFKLFKGLEQSRKIVKKFKPDIVIGTGGYVSGPVLFNASMGKIPAIIHEQNSFPGVTNKILSKTVTKVLTSFEDSHKRFPEAAEDKLVFTGNPVRKEILLSRKNIARKNLSISDEKRMVLCYGGSGGSRKINDAMRLVIKNMVNEDIAFIFATGKSYYDEFMGSISDINLKPYQKVVPYLEDMANALAASDLVIGSAGAISLAEITALGKPSIIIPKAYTAENHQEYNAKSIEKQGAGIAILEKNLTPESLNTAVFKLLGDRELLVDMANASKTIGKPEAIDLIYDEIMKVYNSTQKSTSKKTKKEKVIKEVKEIKKETTPSIEGQAKVIGIKKR.

Residues 11-13 (TGG), Asn-125, Arg-169, Ser-199, and Gln-299 each bind UDP-N-acetyl-alpha-D-glucosamine.

This sequence belongs to the glycosyltransferase 28 family. MurG subfamily.

Its subcellular location is the cell membrane. The enzyme catalyses di-trans,octa-cis-undecaprenyl diphospho-N-acetyl-alpha-D-muramoyl-L-alanyl-D-glutamyl-meso-2,6-diaminopimeloyl-D-alanyl-D-alanine + UDP-N-acetyl-alpha-D-glucosamine = di-trans,octa-cis-undecaprenyl diphospho-[N-acetyl-alpha-D-glucosaminyl-(1-&gt;4)]-N-acetyl-alpha-D-muramoyl-L-alanyl-D-glutamyl-meso-2,6-diaminopimeloyl-D-alanyl-D-alanine + UDP + H(+). It participates in cell wall biogenesis; peptidoglycan biosynthesis. Cell wall formation. Catalyzes the transfer of a GlcNAc subunit on undecaprenyl-pyrophosphoryl-MurNAc-pentapeptide (lipid intermediate I) to form undecaprenyl-pyrophosphoryl-MurNAc-(pentapeptide)GlcNAc (lipid intermediate II). The polypeptide is UDP-N-acetylglucosamine--N-acetylmuramyl-(pentapeptide) pyrophosphoryl-undecaprenol N-acetylglucosamine transferase (Clostridioides difficile (strain 630) (Peptoclostridium difficile)).